We begin with the raw amino-acid sequence, 577 residues long: Nuclear fusion protein tht1 (577 aa).

The first 29 residues, 1–29, serve as a signal peptide directing secretion; it reads MKFHPTRPFGLYFEFFIIISFFFTSESTG. The Lumenal portion of the chain corresponds to 30–404; that stretch reads DVESFMKYSN…MNVYFKGLSN (375 aa). N-linked (GlcNAc...) asparagine glycans are attached at residues Asn163 and Asn372. Residues 405 to 425 form a helical membrane-spanning segment; the sequence is IISSFAFIGFTLFATLSSLFF. The Cytoplasmic portion of the chain corresponds to 426-433; sequence KVLKIHRR. A helical transmembrane segment spans residues 434-454; that stretch reads PIIVFGSLSIIFIHIYCFKIT. Topologically, residues 455-470 are lumenal; that stretch reads SWVNLYGWITCTIART. The helical transmembrane segment at 471–491 threads the bilayer; that stretch reads LSFIKLNIRTFYLTAFLCALL. Over 492–577 the chain is Cytoplasmic; that stretch reads NFLRYLKYRN…ESLEQSPWWD (86 aa).

This sequence belongs to the KAR5 family. Post-translationally, N-glycosylated.

It is found in the endoplasmic reticulum membrane. Its subcellular location is the nucleus membrane. In terms of biological role, required for nuclear membrane fusion during karyogamy. The protein is Nuclear fusion protein tht1 (tht1) of Schizosaccharomyces pombe (strain 972 / ATCC 24843) (Fission yeast).